Reading from the N-terminus, the 571-residue chain is Urease subunit alpha (571 aa).

In terms of domain architecture, Urease spans 133–571 (GGIDTHVHFI…LPLTQRYFLF (439 aa)). 3 residues coordinate Ni(2+): His138, His140, and Lys221. The residue at position 221 (Lys221) is an N6-carboxylysine. His223 contributes to the substrate binding site. Ni(2+)-binding residues include His250 and His276. His324 acts as the Proton donor in catalysis. Asp364 provides a ligand contact to Ni(2+).

The protein belongs to the metallo-dependent hydrolases superfamily. Urease alpha subunit family. As to quaternary structure, heterotrimer of UreA (gamma), UreB (beta) and UreC (alpha) subunits. Three heterotrimers associate to form the active enzyme. Ni cation is required as a cofactor. In terms of processing, carboxylation allows a single lysine to coordinate two nickel ions.

It localises to the cytoplasm. The catalysed reaction is urea + 2 H2O + H(+) = hydrogencarbonate + 2 NH4(+). Its pathway is nitrogen metabolism; urea degradation; CO(2) and NH(3) from urea (urease route): step 1/1. The protein is Urease subunit alpha of Staphylococcus aureus (strain MRSA252).